We begin with the raw amino-acid sequence, 730 residues long: Matrix metalloproteinase-9 (730 aa).

Residues 1-19 (MSPWQPLLLALLAFGCSSA) form the signal peptide. Residues 20-107 (APYQRQPTFV…PRCGVPDVGR (88 aa)) constitute a propeptide, activation peptide. An N-linked (GlcNAc...) asparagine glycan is attached at N39. The short motif at 98–105 (PRCGVPDV) is the Cysteine switch element. C100 lines the Zn(2+) pocket. N-linked (GlcNAc...) asparagine glycans are attached at residues N120 and N127. Ca(2+) contacts are provided by D131 and D165. 2 residues coordinate Zn(2+): H175 and D177. The Ca(2+) site is built by D182, G183, D185, and L187. Position 190 (H190) interacts with Zn(2+). Ca(2+) is bound by residues G197, Q199, and D201. H203 provides a ligand contact to Zn(2+). Positions 205, 206, and 208 each coordinate Ca(2+). Fibronectin type-II domains are found at residues 225–273 (SNGA…FCPS), 283–331 (GEGK…FCPT), and 342–390 (SAGE…FCPD). 6 disulfide bridges follow: C230–C256, C244–C271, C288–C314, C302–C329, C347–C373, and C361–C388. Zn(2+) is bound at residue H401. The active site involves E402. Zn(2+) is bound by residues H405 and H411. The interval 442–529 (LYGRGSKPDP…SEASTESLSP (88 aa)) is disordered. Pro residues predominate over residues 463–477 (PTAPPTMCPTIPPTA). Positions 478–489 (YPTVGPTVGPTG) are enriched in low complexity. A compositionally biased stretch (pro residues) spans 490-514 (APSPGPTSSPSPGPTGAPSPGPTAP). C534 and C729 are joined by a disulfide. Hemopexin repeat units lie at residues 536–581 (VDVF…WPAL), 582–626 (PATL…GLGP), 628–675 (VTHV…FSGV), and 676–729 (PWNS…LLQC).

It belongs to the peptidase M10A family. In terms of assembly, exists as monomer or homodimer; disulfide-linked. Also exists as heterodimer with LCN2. Macrophages and transformed cell lines produce only the monomeric form. Interacts with ECM1. It depends on Zn(2+) as a cofactor. Ca(2+) serves as cofactor. Post-translationally, N- and O-glycosylated.

It is found in the secreted. It localises to the extracellular space. The protein resides in the extracellular matrix. It carries out the reaction Cleavage of gelatin types I and V and collagen types IV and V.. With respect to regulation, inhibited by histatin-3 1/24 (histatin-5). Inhibited by ECM1. Functionally, matrix metalloproteinase that plays an essential role in local proteolysis of the extracellular matrix and in leukocyte migration. Could play a role in bone osteoclastic resorption. Cleaves KiSS1 at a Gly-|-Leu bond. Cleaves NINJ1 to generate the Secreted ninjurin-1 form. Cleaves type IV and type V collagen into large C-terminal three quarter fragments and shorter N-terminal one quarter fragments. Degrades fibronectin but not laminin or Pz-peptide. This chain is Matrix metalloproteinase-9 (Mmp9), found in Mus musculus (Mouse).